Here is an 882-residue protein sequence, read N- to C-terminus: Putative HTH-type transcriptional regulator Mb0914c (882 aa).

An HTH luxR-type domain is found at 814-879 (PARGWGSLTP…QLVDEAARRG (66 aa)). Positions 838–857 (NKDIAKRLFVSPRTVQTHLT) form a DNA-binding region, H-T-H motif.

The sequence is that of Putative HTH-type transcriptional regulator Mb0914c from Mycobacterium bovis (strain ATCC BAA-935 / AF2122/97).